Reading from the N-terminus, the 122-residue chain is Anti-sigma-F factor antagonist RsfB (122 aa).

The STAS domain occupies 7–115; the sequence is ITVTVADHNG…STLHDALTGV (109 aa). Ser61 bears the Phosphoserine mark.

The protein belongs to the anti-sigma-factor antagonist family. Interacts with anti-sigma-F factor RsbW (UsfX). Its phosphorylation may prevent this interaction. In terms of processing, putative phosphorylation on Ser-61 may prevent interaction with RsbW.

Its function is as follows. Positive regulator of sigma-F (SigF) activity. Binds to anti-sigma-F factor RsbW (UsfX) preventing its binding to SigF, thus activating transcription. The protein is Anti-sigma-F factor antagonist RsfB (rsfB) of Mycobacterium tuberculosis (strain CDC 1551 / Oshkosh).